The primary structure comprises 317 residues: Probable cell division protein WhiA (317 aa).

A DNA-binding region (H-T-H motif) is located at residues 267–300 (SLKELGEMLHPPVGKSGVNHRLRRLELIARQVRG).

This sequence belongs to the WhiA family.

Its function is as follows. Involved in cell division and chromosome segregation. The protein is Probable cell division protein WhiA of Moorella thermoacetica (strain ATCC 39073 / JCM 9320).